Here is a 513-residue protein sequence, read N- to C-terminus: L-arabinose transport ATP-binding protein AraG (513 aa).

ABC transporter domains follow at residues 6-243 and 264-508; these read LEMR…GMVG and VKNW…TKTA. 38–45 contacts ATP; the sequence is GENGAGKS.

This sequence belongs to the ABC transporter superfamily.

The protein localises to the cell membrane. It catalyses the reaction L-arabinose(out) + ATP + H2O = L-arabinose(in) + ADP + phosphate + H(+). In terms of biological role, part of the binding-protein-dependent transport system for L-arabinose. Probably responsible for energy coupling to the transport system. This chain is L-arabinose transport ATP-binding protein AraG (araG), found in Geobacillus stearothermophilus (Bacillus stearothermophilus).